Consider the following 178-residue polypeptide: PRA1 family protein 2 (178 aa).

Residues 1 to 41 (MSEVRLPPLRALDDFVLGSARLAAPDPGDPQRWCHRVINNL) are Cytoplasmic-facing. The helical transmembrane segment at 42–62 (LYYQTNYLLCFGISLALAGYI) threads the bilayer. Residues 63–64 (RP) lie on the Extracellular side of the membrane. Residues 65–85 (LHTLLSALVVVVALGVLVWAA) form a helical membrane-spanning segment. Residues 86–96 (ETRAAVRRCRR) are Cytoplasmic-facing. Residues 97–119 (SHPAACLAAVLAISLFILWAVGG) form a helical membrane-spanning segment. At 120–122 (AFT) the chain is on the extracellular side. The chain crosses the membrane as a helical span at residues 123-140 (FLLSITAPVFLILLHASL). Over 141–178 (RLRNLKNKIENKIESIGLKRTPMGLLLEALGQEQEAGS) the chain is Cytoplasmic.

Belongs to the PRA1 family. As to quaternary structure, interacts with CCR5 and GDE1.

Its subcellular location is the endosome membrane. Its function is as follows. May be involved in ER/Golgi transport and vesicular traffic. Plays a proapoptotic role in cerulenin-induced neuroblastoma apoptosis. The protein is PRA1 family protein 2 (Praf2) of Mus musculus (Mouse).